The chain runs to 424 residues: MLTDTLIQEFQDRNLISQITNEIDLKNILLHNKISLYCGFDITADSLHVGHILPLLCLRRFQNLGHRPVILMGGGTSLIGDPSFKLLERQLNSIELVHTWKQKITKQLSLFLKFNVGKNNALIVDNYEWFKNINVLTFLRDIGKHFSINQMIVRDAIQRRIKRLDQGISFTEFSYNLLQAYDFYFLNKQLDVILQIGGSDQWGNIISGIDLIRRLHKKRAYGITVPLLTKKDGRKFGKTELDTIWLDKMKTSPYKFYQYWMNISDSDIYSFLKMFTFLSLSEIKALKDTTKPTELNSVKKILAEYLTNLVHGSNEVRAIQRITSSLFSGKFSEMKETDFFQLEQDGMPSVQLYNSGNLQQLLVYSRLALSRSHAKSMIVSNSVRINNIIQNNPFYILCNRDKMYHKYTLLSRGKKNFCLLCWTK.

Residue tyrosine 37 participates in L-tyrosine binding. A 'HIGH' region motif is present at residues 42 to 51 (ITADSLHVGH). Tyrosine 175 and glutamine 179 together coordinate L-tyrosine. Positions 235–239 (KFGKT) match the 'KMSKS' region motif. ATP is bound at residue lysine 238. Residues 356-414 (GNLQQLLVYSRLALSRSHAKSMIVSNSVRINNIIQNNPFYILCNRDKMYHKYTLLSRGK) enclose the S4 RNA-binding domain.

The protein belongs to the class-I aminoacyl-tRNA synthetase family. TyrS type 1 subfamily. As to quaternary structure, homodimer.

The protein localises to the cytoplasm. It carries out the reaction tRNA(Tyr) + L-tyrosine + ATP = L-tyrosyl-tRNA(Tyr) + AMP + diphosphate + H(+). Its function is as follows. Catalyzes the attachment of tyrosine to tRNA(Tyr) in a two-step reaction: tyrosine is first activated by ATP to form Tyr-AMP and then transferred to the acceptor end of tRNA(Tyr). The polypeptide is Tyrosine--tRNA ligase (Buchnera aphidicola subsp. Baizongia pistaciae (strain Bp)).